The chain runs to 1415 residues: DNA-directed RNA polymerase subunit beta' (1415 aa).

4 residues coordinate Zn(2+): C72, C74, C87, and C90. 3 residues coordinate Mg(2+): D463, D465, and D467. C811, C885, C892, and C895 together coordinate Zn(2+).

This sequence belongs to the RNA polymerase beta' chain family. The RNAP catalytic core consists of 2 alpha, 1 beta, 1 beta' and 1 omega subunit. When a sigma factor is associated with the core the holoenzyme is formed, which can initiate transcription. Mg(2+) is required as a cofactor. The cofactor is Zn(2+).

It carries out the reaction RNA(n) + a ribonucleoside 5'-triphosphate = RNA(n+1) + diphosphate. DNA-dependent RNA polymerase catalyzes the transcription of DNA into RNA using the four ribonucleoside triphosphates as substrates. This chain is DNA-directed RNA polymerase subunit beta', found in Cereibacter sphaeroides (strain ATCC 17029 / ATH 2.4.9) (Rhodobacter sphaeroides).